The sequence spans 433 residues: Gamma-glutamyl phosphate reductase (433 aa).

It belongs to the gamma-glutamyl phosphate reductase family.

The protein resides in the cytoplasm. It catalyses the reaction L-glutamate 5-semialdehyde + phosphate + NADP(+) = L-glutamyl 5-phosphate + NADPH + H(+). Its pathway is amino-acid biosynthesis; L-proline biosynthesis; L-glutamate 5-semialdehyde from L-glutamate: step 2/2. In terms of biological role, catalyzes the NADPH-dependent reduction of L-glutamate 5-phosphate into L-glutamate 5-semialdehyde and phosphate. The product spontaneously undergoes cyclization to form 1-pyrroline-5-carboxylate. The polypeptide is Gamma-glutamyl phosphate reductase (Psychrobacter cryohalolentis (strain ATCC BAA-1226 / DSM 17306 / VKM B-2378 / K5)).